A 410-amino-acid chain; its full sequence is Phosphopentomutase (410 aa).

Mn(2+)-binding residues include Asp10, Asp309, His314, Asp350, His351, and His362.

It belongs to the phosphopentomutase family. The cofactor is Mn(2+).

It localises to the cytoplasm. It carries out the reaction 2-deoxy-alpha-D-ribose 1-phosphate = 2-deoxy-D-ribose 5-phosphate. It catalyses the reaction alpha-D-ribose 1-phosphate = D-ribose 5-phosphate. The protein operates within carbohydrate degradation; 2-deoxy-D-ribose 1-phosphate degradation; D-glyceraldehyde 3-phosphate and acetaldehyde from 2-deoxy-alpha-D-ribose 1-phosphate: step 1/2. Isomerase that catalyzes the conversion of deoxy-ribose 1-phosphate (dRib-1-P) and ribose 1-phosphate (Rib-1-P) to deoxy-ribose 5-phosphate (dRib-5-P) and ribose 5-phosphate (Rib-5-P), respectively. This chain is Phosphopentomutase, found in Aliivibrio fischeri (strain ATCC 700601 / ES114) (Vibrio fischeri).